The chain runs to 223 residues: Exosome complex component RRP46 (223 aa).

It belongs to the RNase PH family. Component of the RNA exosome complex. Specifically part of the catalytically inactive RNA exosome core complex (Exo-9) which may associate with the catalytic subunits RRP6 and DIS3 in cytoplasmic- and nuclear-specific RNA exosome complex forms. Exo-9 is formed by a hexameric base ring of RNase PH domain-containing subunits and a cap ring consisting of CSL4, RRP4 and RRP40.

It localises to the cytoplasm. It is found in the nucleus. Its subcellular location is the nucleolus. Non-catalytic component of the RNA exosome complex which has 3'-&gt;5' exoribonuclease activity and participates in a multitude of cellular RNA processing and degradation events. In the nucleus, the RNA exosome complex is involved in proper maturation of stable RNA species such as rRNA, snRNA and snoRNA, in the elimination of RNA processing by-products and non-coding 'pervasive' transcripts, such as antisense RNA species and cryptic unstable transcripts (CUTs), and of mRNAs with processing defects, thereby limiting or excluding their export to the cytoplasm. In the cytoplasm, the RNA exosome complex is involved in general mRNA turnover and in RNA surveillance pathways, preventing translation of aberrant mRNAs. The catalytic inactive RNA exosome core complex of 9 subunits (Exo-9) is proposed to play a pivotal role in the binding and presentation of RNA for ribonucleolysis, and to serve as a scaffold for the association with catalytic subunits and accessory proteins or complexes. RRP46 is part of the hexameric ring of RNase PH domain-containing subunits proposed to form a central channel which threads RNA substrates for degradation. This Saccharomyces cerevisiae (strain ATCC 204508 / S288c) (Baker's yeast) protein is Exosome complex component RRP46 (RRP46).